Reading from the N-terminus, the 243-residue chain is Probable phosphatase CLD_1129 (243 aa).

Positions 8, 10, 16, 41, 74, 102, 132, 192, and 194 each coordinate Zn(2+).

Belongs to the PHP family. Requires Zn(2+) as cofactor.

In Clostridium botulinum (strain Okra / Type B1), this protein is Probable phosphatase CLD_1129.